We begin with the raw amino-acid sequence, 444 residues long: Xaa-Pro dipeptidase (444 aa).

The Mn(2+) site is built by aspartate 247, aspartate 258, histidine 340, glutamate 385, and glutamate 424.

Belongs to the peptidase M24B family. Bacterial-type prolidase subfamily. Mn(2+) is required as a cofactor.

The enzyme catalyses Xaa-L-Pro dipeptide + H2O = an L-alpha-amino acid + L-proline. Splits dipeptides with a prolyl residue in the C-terminal position. The protein is Xaa-Pro dipeptidase of Photorhabdus laumondii subsp. laumondii (strain DSM 15139 / CIP 105565 / TT01) (Photorhabdus luminescens subsp. laumondii).